A 332-amino-acid polypeptide reads, in one-letter code: Biotin synthase (332 aa).

In terms of domain architecture, Radical SAM core spans 53–283 (WGKGGVHACS…VHPRKTIKFA (231 aa)). [4Fe-4S] cluster contacts are provided by Cys71, Cys75, and Cys78. Residues Cys150, Cys211, and Lys281 each coordinate [2Fe-2S] cluster.

The protein belongs to the radical SAM superfamily. Biotin synthase family. In terms of assembly, homodimer. [4Fe-4S] cluster serves as cofactor. [2Fe-2S] cluster is required as a cofactor.

It catalyses the reaction (4R,5S)-dethiobiotin + (sulfur carrier)-SH + 2 reduced [2Fe-2S]-[ferredoxin] + 2 S-adenosyl-L-methionine = (sulfur carrier)-H + biotin + 2 5'-deoxyadenosine + 2 L-methionine + 2 oxidized [2Fe-2S]-[ferredoxin]. It functions in the pathway cofactor biosynthesis; biotin biosynthesis; biotin from 7,8-diaminononanoate: step 2/2. Functionally, catalyzes the conversion of dethiobiotin (DTB) to biotin by the insertion of a sulfur atom into dethiobiotin via a radical-based mechanism. The polypeptide is Biotin synthase (Chlorobium luteolum (strain DSM 273 / BCRC 81028 / 2530) (Pelodictyon luteolum)).